Here is a 133-residue protein sequence, read N- to C-terminus: Sec-independent protein translocase protein TatB (133 aa).

A helical membrane pass occupies residues 1–21 (MFDIGFWELVLIAIVALVVLG). The tract at residues 67–133 (EQMGMQNLSP…ASQPAEKKAE (67 aa)) is disordered. Polar residues predominate over residues 70–84 (GMQNLSPELQKSVES). Residues 97-116 (AATPSSEASSTSSNPSSATE) show a composition bias toward low complexity.

The protein belongs to the TatB family. In terms of assembly, the Tat system comprises two distinct complexes: a TatABC complex, containing multiple copies of TatA, TatB and TatC subunits, and a separate TatA complex, containing only TatA subunits. Substrates initially bind to the TatABC complex, which probably triggers association of the separate TatA complex to form the active translocon.

Its subcellular location is the cell inner membrane. In terms of biological role, part of the twin-arginine translocation (Tat) system that transports large folded proteins containing a characteristic twin-arginine motif in their signal peptide across membranes. Together with TatC, TatB is part of a receptor directly interacting with Tat signal peptides. TatB may form an oligomeric binding site that transiently accommodates folded Tat precursor proteins before their translocation. In Vibrio cholerae serotype O1 (strain ATCC 39315 / El Tor Inaba N16961), this protein is Sec-independent protein translocase protein TatB.